We begin with the raw amino-acid sequence, 103 residues long: Small ribosomal subunit protein uS10 (103 aa).

The protein belongs to the universal ribosomal protein uS10 family. In terms of assembly, part of the 30S ribosomal subunit.

In terms of biological role, involved in the binding of tRNA to the ribosomes. In Hydrogenovibrio crunogenus (strain DSM 25203 / XCL-2) (Thiomicrospira crunogena), this protein is Small ribosomal subunit protein uS10.